Consider the following 1137-residue polypeptide: DENN domain-containing protein 2B (1137 aa).

Polar residues predominate over residues 1–12 (MTMTANKNSSIT). The tract at residues 1–99 (MTMTANKNSS…PTCPFKTASF (99 aa)) is disordered. A phosphoserine mark is found at Ser-30 and Ser-32. The span at 32–43 (SPPPVLSPPRSP) shows a compositional bias: pro residues. Over residues 49 to 64 (DSETSACRYPSHSSSR) the composition is skewed to polar residues. Residues 73–92 (PAPSPQNPQDPSPDTSPPTC) show a composition bias toward pro residues. The residue at position 231 (Thr-231) is a Phosphothreonine. The residue at position 233 (Ser-233) is a Phosphoserine. The segment at 293–573 (KEQPGRGLPQ…HRLPRLPKRH (281 aa)) is disordered. Over residues 324–348 (EEPAGGASVSAGSRAVGVAGVAGEA) the composition is skewed to low complexity. At Thr-364 the chain carries Phosphothreonine. Position 368 is a phosphoserine (Ser-368). The segment covering 368–380 (SPSSQRLPSKSSL) has biased composition (low complexity). Over residues 392 to 402 (RTFEYEADKNP) the composition is skewed to basic and acidic residues. The segment at 401–447 (NPKSKPSNGLPPSPTPAAPPPLPSTPAPPVTRRPKKDMRGHRKSQSR) is interaction with ABL1. Residues 409-431 (GLPPSPTPAAPPPLPSTPAPPVT) show a composition bias toward pro residues. The span at 432-446 (RRPKKDMRGHRKSQS) shows a compositional bias: basic residues. A compositionally biased stretch (polar residues) spans 456–481 (SSLQSLYPSSPTENGTENQPKFGSKS). The residue at position 482 (Thr-482) is a Phosphothreonine. Residues 495-508 (LPKENPYEDVDLKS) show a composition bias toward basic and acidic residues. Polar residues-rich tracts occupy residues 514-524 (KSQQLSENSLD) and 539-558 (SPPT…SGNW). The residue at position 545 (Ser-545) is a Phosphoserine. Residues 562-573 (KSHRLPRLPKRH) are compositionally biased toward basic residues. A phosphoserine mark is found at Ser-574 and Ser-622. The disordered stretch occupies residues 641-661 (IETASLRDENSESESDSDDRF). In terms of domain architecture, uDENN spans 698 to 846 (EYFVVVSLKK…PFPAPGKTIK (149 aa)). The 134-residue stretch at 868-1001 (RLEHVDFECL…LQAALEQALE (134 aa)) folds into the cDENN domain. One can recognise a dDENN domain in the interval 1003–1096 (KNELISQDSD…QDRELRKCRA (94 aa)).

Interacts with ITSN1 and GRB2. Isoform 1 interacts with the SH3 domain of ABL1. In terms of processing, phosphorylated. Phosphorylation decreases ITSN1 binding. Widely expressed with the exception of peripheral blood lymphocytes. Isoform 1 is expressed in several epithelial and fibroblast (including tumorigenic) but absent in lymphoid cell lines (at protein level). Isoform 3 is expressed in primary cell or weakly tumorigenic but not in tumorigenic cell lines (at protein level).

The protein localises to the cytoplasm. Its subcellular location is the cell cortex. It localises to the cell membrane. The protein resides in the recycling endosome. May be involved in cytoskeletal organization and tumorogenicity. Seems to be involved in a signaling transduction pathway leading to activation of MAPK1/ERK2. Plays a role in EGFR trafficking from recycling endosomes back to the cell membrane. Functionally, guanine nucleotide exchange factor (GEF) which may activate RAB9A and RAB9B. Promotes the exchange of GDP to GTP, converting inactive GDP-bound Rab proteins into their active GTP-bound form. Its function is as follows. May block ERK2 activation stimulated by ABL1. May alter cell morphology and cell growth. The polypeptide is DENN domain-containing protein 2B (Homo sapiens (Human)).